The primary structure comprises 170 residues: Two-component response regulator ORR6 (170 aa).

The region spanning 51-170 (HVLAVDDSSV…DVSRLCSRIR (120 aa)) is the Response regulatory domain. D103 is modified (4-aspartylphosphate).

Belongs to the ARR family. Type-A subfamily. In terms of processing, two-component system major event consists of a His-to-Asp phosphorelay between a sensor histidine kinase (HK) and a response regulator (RR). In plants, the His-to-Asp phosphorelay involves an additional intermediate named Histidine-containing phosphotransfer protein (HPt). This multistep phosphorelay consists of a His-Asp-His-Asp sequential transfer of a phosphate group between first a His and an Asp of the HK protein, followed by the transfer to a conserved His of the HPt protein and finally the transfer to an Asp in the receiver domain of the RR protein. In terms of tissue distribution, expressed in roots, leaf blades, leaf sheaths, shoot apex, flowers and panicles.

In terms of biological role, functions as a response regulator involved in His-to-Asp phosphorelay signal transduction system. Phosphorylation of the Asp residue in the receiver domain activates the ability of the protein to promote the transcription of target genes. Type-A response regulators seem to act as negative regulators of the cytokinin signaling. The polypeptide is Two-component response regulator ORR6 (Oryza sativa subsp. japonica (Rice)).